The primary structure comprises 125 residues: Small ribosomal subunit protein bS6 (125 aa).

The protein belongs to the bacterial ribosomal protein bS6 family.

In terms of biological role, binds together with bS18 to 16S ribosomal RNA. This chain is Small ribosomal subunit protein bS6 (rpsF), found in Pasteurella multocida (strain Pm70).